A 1049-amino-acid chain; its full sequence is Probable disease resistance protein RF9 (1049 aa).

Residues 25–41 (QGVEDQVTELKRDLNLL) are a coiled coil. The interval 139 to 158 (GYKQPQGDKQREMRPRFSKD) is disordered. The span at 144 to 158 (QGDKQREMRPRFSKD) shows a compositional bias: basic and acidic residues. Positions 147-460 (KQREMRPRFS…AEGIFQPRHY (314 aa)) constitute an NB-ARC domain. Residue 190–197 (GMGGLGKT) participates in ATP binding. 10 LRR repeats span residues 584–608 (LELL…SIGQ), 609–634 (LIHL…NLKL), 657–682 (MQQL…NLVK), 683–707 (LETL…RLRT), 776–799 (PSHL…ILEK), 800–827 (LHQL…GFPQ), 849–873 (MPVL…HLPS), 896–923 (LVHL…GFPQ), 945–968 (MPQL…GFPQ), and 990–1015 (MPLL…RFIY).

The protein belongs to the disease resistance NB-LRR family.

Its function is as follows. Potential disease resistance protein. This Arabidopsis thaliana (Mouse-ear cress) protein is Probable disease resistance protein RF9 (RF9).